A 64-amino-acid chain; its full sequence is Prokaryotic ubiquitin-like protein Pup (64 aa).

Residues 1–36 are disordered; it reads MAQEQTKRGGGGGDDEDVTGTTAAGQERRKKLAQDT. Positions 21-58 are ARC ATPase binding; it reads TTAAGQERRKKLAQDTDDLLDEIDDVLEENAEDFVRAY. The stretch at 26 to 52 forms a coiled coil; it reads QERRKKLAQDTDDLLDEIDDVLEENAE. At Q64 the chain carries Deamidated glutamine. An Isoglutamyl lysine isopeptide (Gln-Lys) (interchain with K-? in acceptor proteins) cross-link involves residue Q64.

The protein belongs to the prokaryotic ubiquitin-like protein family. As to quaternary structure, strongly interacts with the proteasome-associated ATPase ARC through a hydrophobic interface; the interacting region of Pup lies in its C-terminal half. There is one Pup binding site per ARC hexamer ring. In terms of processing, is modified by deamidation of its C-terminal glutamine to glutamate by the deamidase Dop, a prerequisite to the subsequent pupylation process.

The protein operates within protein degradation; proteasomal Pup-dependent pathway. Protein modifier that is covalently attached to lysine residues of substrate proteins, thereby targeting them for proteasomal degradation. The tagging system is termed pupylation. The sequence is that of Prokaryotic ubiquitin-like protein Pup from Mycobacterium ulcerans (strain Agy99).